Consider the following 174-residue polypeptide: Adenylate kinase (174 aa).

The NMP stretch occupies residues 12 to 41; that stretch reads STGDMLRAAIKAGTPLGLEAKKIIDEGGLV. AMP contacts are provided by residues T13, R18, 39–41, 67–70, and Q74; these read GLV and GFPR. The LID stretch occupies residues 104–141; that stretch reads GRRVHLASGRTYHVTYNPPKVEGKDDVTGEDLIQRDDD. ATP-binding positions include R105 and 114–115; that span reads TY. R138 and R149 together coordinate AMP.

The protein belongs to the adenylate kinase family. As to quaternary structure, monomer.

Its subcellular location is the cytoplasm. It catalyses the reaction AMP + ATP = 2 ADP. It participates in purine metabolism; AMP biosynthesis via salvage pathway; AMP from ADP: step 1/1. Its function is as follows. Catalyzes the reversible transfer of the terminal phosphate group between ATP and AMP. Plays an important role in cellular energy homeostasis and in adenine nucleotide metabolism. The polypeptide is Adenylate kinase (Neisseria lactamica).